Here is a 65-residue protein sequence, read N- to C-terminus: Small ribosomal subunit protein bS21 (65 aa).

It belongs to the bacterial ribosomal protein bS21 family.

In Chlorobium limicola (strain DSM 245 / NBRC 103803 / 6330), this protein is Small ribosomal subunit protein bS21.